The chain runs to 155 residues: Protein SprT-like (155 aa).

The region spanning 7–144 (QRHMEEVSLQ…CGSCGGKLKQ (138 aa)) is the SprT-like domain. Residue histidine 67 participates in Zn(2+) binding. Residue glutamate 68 is part of the active site. Residue histidine 71 coordinates Zn(2+).

It belongs to the SprT family. Requires Zn(2+) as cofactor.

Its subcellular location is the cytoplasm. This Listeria welshimeri serovar 6b (strain ATCC 35897 / DSM 20650 / CCUG 15529 / CIP 8149 / NCTC 11857 / SLCC 5334 / V8) protein is Protein SprT-like.